A 330-amino-acid chain; its full sequence is MSTLFQALQAEKNADDVSVHVKTISTEDLPKDGVLIKVAYSGINYKDGLAGKAGGNIVREYPLILGIDAAGTVVSSNDPRFAEGDEVIATSYELGVSRDGGLSEYASVPGDWLVPLPQNLSLKEAMVYGTAGFTAALSVHRLEQNGLSPEKGSVLVTGATGGVGGIAVSMLNKRGYDVVASTGNREAADYLKQLGASEVISREDVYDGTLKALSKQQWQGAVDPVGGKQLASLLSKIQYGGSVAVSGLTGGGEVPATVYPFILRGVSLLGIDSVYCPMDVRAAVWERMSSDLKPDQLLTIVDREVSLEETPGALKDILQNRIQGRVIVKL.

NADP(+) contacts are provided by residues Tyr-45, 160 to 163 (TGGV), 182 to 184 (TGN), Arg-202, Leu-248, Ile-262, Ser-273, and Asn-320.

Belongs to the zinc-containing alcohol dehydrogenase family. Quinone oxidoreductase subfamily. In terms of assembly, homodimer, or homotetramer.

It is found in the cytoplasm. In Bacillus subtilis (strain 168), this protein is Putative quinone oxidoreductase YhfP (yhfP).